The sequence spans 319 residues: Putative olfactory receptor 52L2 (319 aa).

The Extracellular segment spans residues 1–43 (MNLDSFFSFLLKSLIMALSNSSWRLPQPSFFLVGIPGLEESQH). Residue N20 is glycosylated (N-linked (GlcNAc...) asparagine). Residues 44 to 64 (WIALPLGILYLLALVGNVTIL) traverse the membrane as a helical segment. The Cytoplasmic segment spans residues 65–72 (FIIWMDPS). A helical membrane pass occupies residues 73–93 (LHQSMYLFLSMLAAIDLVVAS). The Extracellular segment spans residues 94 to 117 (STAPKALAVLLVRAQEIGYTVCLI). A disulfide bridge connects residues C115 and C207. The chain crosses the membrane as a helical span at residues 118–138 (QMFFTHAFSSMESGVLVAMAL). Residues 139 to 157 (DRYVAICHPLHHSTILHPG) are Cytoplasmic-facing. The helical transmembrane segment at 158–178 (VIGHIGMVVLVRGLLLLIPFL) threads the bilayer. Over 179–214 (ILLRKLIFCQATIIGHAYCEHMAVVKLACSETTVNR) the chain is Extracellular. Residues 215-235 (AYGLTVALLVVGLDVLAIGVS) form a helical membrane-spanning segment. The Cytoplasmic portion of the chain corresponds to 236 to 255 (YAHILQAVLKVPGNEARLKA). A helical membrane pass occupies residues 256–276 (FSTCGSHVCVILVFYIPGMFS). The Extracellular segment spans residues 277–291 (FLTHRFGHHVPHHVH). The chain crosses the membrane as a helical span at residues 292–312 (VLLAILYRLVPPALNPLVYRV). Residues 313–319 (KTQKIHQ) lie on the Cytoplasmic side of the membrane.

Belongs to the G-protein coupled receptor 1 family.

It is found in the cell membrane. In terms of biological role, odorant receptor. The sequence is that of Putative olfactory receptor 52L2 (OR52L2P) from Homo sapiens (Human).